Here is a 194-residue protein sequence, read N- to C-terminus: Leucyl/phenylalanyl-tRNA--protein transferase (194 aa).

The protein belongs to the L/F-transferase family.

The protein localises to the cytoplasm. The enzyme catalyses N-terminal L-lysyl-[protein] + L-leucyl-tRNA(Leu) = N-terminal L-leucyl-L-lysyl-[protein] + tRNA(Leu) + H(+). The catalysed reaction is N-terminal L-arginyl-[protein] + L-leucyl-tRNA(Leu) = N-terminal L-leucyl-L-arginyl-[protein] + tRNA(Leu) + H(+). It catalyses the reaction L-phenylalanyl-tRNA(Phe) + an N-terminal L-alpha-aminoacyl-[protein] = an N-terminal L-phenylalanyl-L-alpha-aminoacyl-[protein] + tRNA(Phe). In terms of biological role, functions in the N-end rule pathway of protein degradation where it conjugates Leu, Phe and, less efficiently, Met from aminoacyl-tRNAs to the N-termini of proteins containing an N-terminal arginine or lysine. The sequence is that of Leucyl/phenylalanyl-tRNA--protein transferase from Prosthecochloris aestuarii (strain DSM 271 / SK 413).